A 496-amino-acid chain; its full sequence is Glutamyl-tRNA(Gln) amidotransferase subunit A (496 aa).

Catalysis depends on charge relay system residues Lys-75 and Ser-150. Ser-174 acts as the Acyl-ester intermediate in catalysis.

The protein belongs to the amidase family. GatA subfamily. As to quaternary structure, heterotrimer of A, B and C subunits.

It catalyses the reaction L-glutamyl-tRNA(Gln) + L-glutamine + ATP + H2O = L-glutaminyl-tRNA(Gln) + L-glutamate + ADP + phosphate + H(+). In terms of biological role, allows the formation of correctly charged Gln-tRNA(Gln) through the transamidation of misacylated Glu-tRNA(Gln) in organisms which lack glutaminyl-tRNA synthetase. The reaction takes place in the presence of glutamine and ATP through an activated gamma-phospho-Glu-tRNA(Gln). The polypeptide is Glutamyl-tRNA(Gln) amidotransferase subunit A (Burkholderia ambifaria (strain MC40-6)).